We begin with the raw amino-acid sequence, 300 residues long: Cholesterol 25-hydroxylase-like protein (300 aa).

Asparagine 9 is a glycosylation site (N-linked (GlcNAc...) asparagine). The next 3 helical transmembrane spans lie at 54-73 (YTWV…VPFF), 95-115 (LQGW…LIWV), and 130-152 (MLSQ…HYIN). The 132-residue stretch at 135–266 (AIFFLAFDFT…WFNYLDRLMG (132 aa)) folds into the Fatty acid hydroxylase domain. The short motif at 148 to 152 (FHYIN) is the Histidine box-1 element. A Histidine box-2 motif is present at residues 163–167 (HSVHH). A helical membrane pass occupies residues 192–212 (ITTIPWIFPTHCLTYWIWFFI). A Histidine box-3 motif is present at residues 242-248 (AHDMHHL).

It belongs to the sterol desaturase family. Fe cation is required as a cofactor.

It localises to the membrane. Its function is as follows. Probable sterol desaturase. The chain is Cholesterol 25-hydroxylase-like protein from Caenorhabditis elegans.